Here is a 1921-residue protein sequence, read N- to C-terminus: MKSPALQSLSMAGLQLMTPASSPMGPFFGLPWQQEAIHDNIYTPRKYQVELLEAALDHNTIVCLNTGSGKTFIAVLLTKELSYQIRGDFNKNGKRTVFLVNSANQVAQQVSAVRTHSDLKVGEYSSLEVTESWTKEKWSQEFSKHQVLVMTCHVALTVLRNEYLSLSNINLLVFDECHLAIQDHPYREIMKICEDYPSCPRILGLTASILNGKCDPAELEEKIKKLEKILKSNAETATDLVVLDRYTSQPCEIVVDCGPYTDKSGLYGRLLRELDEALHFLNDCNISVHSKERDSTLISKQILSDCRAVLVVLGPWCADKVAGMMVRELQKYIKHEQEELHRKFLLFTDTFLRKIHALCEEHFSPASLDLKFVTPKVIKLLEILRKYKPYERQQFESVEWYNNRNQDNYVSWSDSEDDDEDEEIEEKEKPETNFPSPFTNILCGIIFVERRYTAVVLNRLIKEAGKQDPELAYISSNFITGHGIGKNQPRNKQMEVEFRKQEEVLRKFRAHETNLLIATSIVEEGVDIPKCNLVVRFDLPTEYRSYVQSKGRARAPISNYIMLADTDKIKSFEEDLKTYKAIEKILRNKCSKSVDTSETETEPIVDDDDVFPPYVLRTDENSPRVTINTAIGHINRYCARLPSDPFTHLAPKCKTRELPDHTFYSTLYLPINSPLRASIVGPPMSCARLAERVVALICCEKLHKIGELDDHLMPVGKETVKYEEELDLHDEEETSVPGRPGSTKRRQCYPKAIPECLRDSYPKPDQPCYLYVIGMVLTTPLPDELNFRRRKLYPPEDTTRCFGILTAKPIPQIPHFPVYTRSGEVTISIELKKSGFTLSLQMLELITRLHQYIFSHILRLEKPALEFKPTEADSAYCVLPLNIVDDSSTLDIDFKFMEDIEKSEARTGIPSTQYTKEMPFIFKLEDYQDAVIIPRYRNFDQPHRFYVADVYTDLTPLSKFPSPEYETFAEYYKTKYNLDLTNLNQPLLDVDHTSSRLNLLTPRHLNQKGKALPLSSAEKRKAKWESLQNKQILVPELCAIHPIPASLWRKAVCLPSILYRLHCLLTAEELRAQTATDAGVGVKSLPADFRYPNLDFGWKKSIDSKSFISIPSSSLVENENYCKHSTIVVPENAAHQGANRTSSAEKHDQMSVSYRTLLDESPSKLQIDVSAELAAINGVSYNKNLANGNCDLVNRDFCQGNQLNYCRQEIPVQPTTSYPIQNLYSSENQPKPSNECTLLSNKYLDGNANRSTSDGCPKMTVTTSTSTALNLSKDKVDSEKNTSSGYSSKTLGPNPGLILQALTLSNASDGFNLERLEMLGDSFLKHAITTYLFCTYPDAHEGRLSYMRSKKVSNCNLYRLGKKKGLPSRMVVSIFDPPVNWLPPGYIVNQDKSNTDKWEKEETTKENLLANGKLDYDDDDEEDEDLMWRLPKEETDFEDDFLEYDQEHIKFIDSMLMGSGAFVKKISLSHFSTTDSNYEWKAPKKSSLGNVPFSSDFDDFDYSSWDAMCYLDPSKAVEEDDFVVGFWNPSEENCGVDAGKQSISYDLHTEQCIADKSIADCVEALLGCYLTSCGERAAQLFLCSLGLKVLPVIKKTDWESTLCATGENCNSEQKNLSPNSVSACIVNSEPSLYKDLEYGCLKIPPRCMFDHPDAEKTLNHLISGFENFEKKINYSFKNKAYLLQAFTHASYHYNTITDCYQRLEFLGDAILDYLITKHLYEDPRQHSPGVLTDLRSALVNNTIFASLAVKYDYHKYFKAVSPELFHVIDDFVQFQMEKNEMQGMDSELRRSEEDEEKEEDIEVPKAMGDIFESLAGAIYMDSGMSLEMVWQVYYPMMRPLIEKFSANVPRSPVRELLEMEPETAKFSPAERTYDGKVRVTVEVVGKGKFKGVGRSYRIAKSAAARRALRSLKANQPQVPNS.

The Helicase ATP-binding domain maps to 51-227 (LLEAALDHNT…ELEEKIKKLE (177 aa)). Residue 64–71 (LNTGSGKT) participates in ATP binding. Residues 175–178 (DECH) carry the DECH box motif. The disordered stretch occupies residues 409 to 433 (YVSWSDSEDDDEDEEIEEKEKPETN). Residues 414-425 (DSEDDDEDEEIE) are compositionally biased toward acidic residues. The region spanning 433-602 (NFPSPFTNIL…SVDTSETETE (170 aa)) is the Helicase C-terminal domain. The Dicer dsRNA-binding fold domain maps to 630–722 (AIGHINRYCA…MPVGKETVKY (93 aa)). The disordered stretch occupies residues 727 to 746 (DLHDEEETSVPGRPGSTKRR). The 148-residue stretch at 895-1042 (KFMEDIEKSE…LVPELCAIHP (148 aa)) folds into the PAZ domain. Positions 1270–1289 (NLSKDKVDSEKNTSSGYSSK) are disordered. 2 RNase III domains span residues 1277–1404 (DSEK…EETT) and 1665–1823 (FENF…MDSG). Residues E1317, D1396, E1399, and E1704 each coordinate Mg(2+). The segment at 1782–1801 (QGMDSELRRSEEDEEKEEDI) is disordered. The Mg(2+) site is built by D1809 and E1812. One can recognise a DRBM domain in the interval 1848 to 1913 (VPRSPVRELL…ARRALRSLKA (66 aa)).

This sequence belongs to the helicase family. Dicer subfamily. In terms of assembly, component of the RISC loading complex (RLC), or micro-RNA (miRNA) loading complex (miRLC), which is composed of DICER1, AGO2 and TARBP2; DICER1 and TARBP2 are required to process precursor miRNAs (pre-miRNAs) to mature miRNAs and then load them onto AGO2. Note that the trimeric RLC/miRLC is also referred to as RISC. Mg(2+) serves as cofactor. The cofactor is Mn(2+).

It localises to the cytoplasm. It catalyses the reaction Endonucleolytic cleavage to 5'-phosphomonoester.. Functionally, double-stranded RNA (dsRNA) endoribonuclease playing a central role in short dsRNA-mediated post-transcriptional gene silencing. Cleaves naturally occurring long dsRNAs and short hairpin pre-microRNAs (miRNA) into fragments of twenty-one to twenty-three nucleotides with 3' overhang of two nucleotides, producing respectively short interfering RNAs (siRNA) and mature microRNAs. SiRNAs and miRNAs serve as guide to direct the RNA-induced silencing complex (RISC) to complementary RNAs to degrade them or prevent their translation. Gene silencing mediated by siRNAs, also called RNA interference, controls the elimination of transcripts from mobile and repetitive DNA elements of the genome but also the degradation of exogenous RNA of viral origin for instance. The miRNA pathway on the other side is a mean to specifically regulate the expression of target genes. The protein is Endoribonuclease Dicer (DICER1) of Gallus gallus (Chicken).